An 86-amino-acid chain; its full sequence is Omega-theraphotoxin-Hhn1a 2 (86 aa).

A signal peptide spans 1–21 (MKSIVFVALLGLALLAVVCSA). A propeptide spanning residues 22 to 50 (SEDAHKELLKEVVRAMVVDKTDAVQAEER) is cleaved from the precursor. Disulfide bonds link Cys52-Cys66, Cys59-Cys71, and Cys65-Cys78.

This sequence belongs to the neurotoxin 10 (Hwtx-1) family. 17 (Hntx-9) subfamily. In terms of tissue distribution, expressed by the venom gland.

Its subcellular location is the secreted. Its function is as follows. Ion channel inhibitor. This chain is Omega-theraphotoxin-Hhn1a 2, found in Cyriopagopus hainanus (Chinese bird spider).